Reading from the N-terminus, the 290-residue chain is Probable protein phosphatase 2C 62 (290 aa).

A PPM-type phosphatase domain is found at 38–288 (KHGYHLVKGK…DDISCIVVKF (251 aa)). Residues Asp75, Gly76, Asp240, and Asp279 each contribute to the Mn(2+) site.

Belongs to the PP2C family. Requires Mg(2+) as cofactor. The cofactor is Mn(2+).

It catalyses the reaction O-phospho-L-seryl-[protein] + H2O = L-seryl-[protein] + phosphate. The catalysed reaction is O-phospho-L-threonyl-[protein] + H2O = L-threonyl-[protein] + phosphate. The protein is Probable protein phosphatase 2C 62 of Oryza sativa subsp. japonica (Rice).